A 389-amino-acid chain; its full sequence is Phenylpropanoylacetyl-CoA synthase (389 aa).

Cys163 is a catalytic residue.

It belongs to the thiolase-like superfamily. Chalcone/stilbene synthases family. Homodimer. Expressed in both the leaf and rhizome, with higher expression in the rhizome.

It catalyses the reaction (E)-feruloyl-CoA + malonyl-CoA + H(+) = (E)-feruloylacetyl-CoA + CO2 + CoA. It carries out the reaction 4-coumaroyl-CoA + malonyl-CoA + H(+) = (4-coumaroyl)acetyl-CoA + CO2 + CoA. It participates in secondary metabolite biosynthesis; flavonoid biosynthesis. Its function is as follows. Catalyzes the formation of feruloyldiketide-CoA by condensing feruloyl-CoA and malonyl-CoA in the curcuminoid biosynthesis. Has no activity with cinnamoyl-CoA. This is Phenylpropanoylacetyl-CoA synthase (DCS) from Curcuma longa (Turmeric).